A 68-amino-acid chain; its full sequence is MKTQFVILIVAVVLLQLISHSEAFLGALWNVAKSVFGKRGLRNFDDLDDTFEPEMSEADLKYLQDLLR.

An N-terminal signal peptide occupies residues 1 to 23 (MKTQFVILIVAVVLLQLISHSEA). F36 is subject to Phenylalanine amide. Positions 40–68 (GLRNFDDLDDTFEPEMSEADLKYLQDLLR) are excised as a propeptide.

Belongs to the non-disulfide-bridged peptide (NDBP) superfamily. Short antimicrobial peptide (group 4) family. Expressed by the venom gland.

It localises to the secreted. The protein resides in the target cell membrane. Cationic amphipathic peptide with antibacterial activities against both Gram-positive and Gram-negative bacteria. Also shows antifungal activities. Is mildly hemolytic against human erythrocytes. In addition, when tested in vitro on the parasite Trypanosoma cruzi (responsible of the Chagas disease), is able to reduce the number of the three forms (epimastigote, trypomastigote and amastigote). Also shows antiplasmodial and cytotoxic activity (tested on Plasmodium gallinaceum, and MCF-7 breast cancer cell line). The polypeptide is Amphipathic peptide VmCT1 (Vaejovis mexicanus smithi (Mexican scorpion)).